The sequence spans 344 residues: Holliday junction branch migration complex subunit RuvB (344 aa).

Residues 1 to 10 (MAIQSSSSGS) show a composition bias toward low complexity. The interval 1 to 37 (MAIQSSSSGSKPPAPKRLVAPEATAAEGDGGRDEGLR) is disordered. A large ATPase domain (RuvB-L) region spans residues 13–197 (PAPKRLVAPE…FGLIQRLEFY (185 aa)). ATP is bound by residues Leu-36, Arg-37, Gly-78, Lys-81, Thr-82, Thr-83, 144-146 (EDF), Arg-187, Tyr-197, and Arg-234. Residue Thr-82 participates in Mg(2+) binding. The segment at 198–268 (SCSDLEAIVS…VVVEALAMHR (71 aa)) is small ATPAse domain (RuvB-S). Residues 271-344 (GRGLDPSDRR…DAGRAHLEAA (74 aa)) are head domain (RuvB-H). Arg-326 and Arg-331 together coordinate DNA.

This sequence belongs to the RuvB family. As to quaternary structure, homohexamer. Forms an RuvA(8)-RuvB(12)-Holliday junction (HJ) complex. HJ DNA is sandwiched between 2 RuvA tetramers; dsDNA enters through RuvA and exits via RuvB. An RuvB hexamer assembles on each DNA strand where it exits the tetramer. Each RuvB hexamer is contacted by two RuvA subunits (via domain III) on 2 adjacent RuvB subunits; this complex drives branch migration. In the full resolvosome a probable DNA-RuvA(4)-RuvB(12)-RuvC(2) complex forms which resolves the HJ.

The protein resides in the cytoplasm. It carries out the reaction ATP + H2O = ADP + phosphate + H(+). In terms of biological role, the RuvA-RuvB-RuvC complex processes Holliday junction (HJ) DNA during genetic recombination and DNA repair, while the RuvA-RuvB complex plays an important role in the rescue of blocked DNA replication forks via replication fork reversal (RFR). RuvA specifically binds to HJ cruciform DNA, conferring on it an open structure. The RuvB hexamer acts as an ATP-dependent pump, pulling dsDNA into and through the RuvAB complex. RuvB forms 2 homohexamers on either side of HJ DNA bound by 1 or 2 RuvA tetramers; 4 subunits per hexamer contact DNA at a time. Coordinated motions by a converter formed by DNA-disengaged RuvB subunits stimulates ATP hydrolysis and nucleotide exchange. Immobilization of the converter enables RuvB to convert the ATP-contained energy into a lever motion, pulling 2 nucleotides of DNA out of the RuvA tetramer per ATP hydrolyzed, thus driving DNA branch migration. The RuvB motors rotate together with the DNA substrate, which together with the progressing nucleotide cycle form the mechanistic basis for DNA recombination by continuous HJ branch migration. Branch migration allows RuvC to scan DNA until it finds its consensus sequence, where it cleaves and resolves cruciform DNA. The chain is Holliday junction branch migration complex subunit RuvB from Synechococcus sp. (strain RCC307).